We begin with the raw amino-acid sequence, 100 residues long: Urease subunit gamma (100 aa).

It belongs to the urease gamma subunit family. Heterotrimer of UreA (gamma), UreB (beta) and UreC (alpha) subunits. Three heterotrimers associate to form the active enzyme.

The protein localises to the cytoplasm. The enzyme catalyses urea + 2 H2O + H(+) = hydrogencarbonate + 2 NH4(+). It participates in nitrogen metabolism; urea degradation; CO(2) and NH(3) from urea (urease route): step 1/1. The chain is Urease subunit gamma from Alkalilimnicola ehrlichii (strain ATCC BAA-1101 / DSM 17681 / MLHE-1).